The chain runs to 2919 residues: RNA-directed RNA polymerase L (2919 aa).

The interval 86-675 is endonuclease; sequence SLMKQLDPND…DNDINLDSAT (590 aa). 3 residues coordinate Mn(2+): His-535, Asp-567, and Glu-585. The active-site For endonuclease activity is Lys-604. Residues 1472–1671 enclose the RdRp catalytic domain; that stretch reads ARKTLKNEYM…SWFRKKEKLG (200 aa). A Mg(2+)-binding site is contributed by Asp-1636. The segment at 2494 to 2632 is cap-binding; that stretch reads RVGKLGILGS…PLYWNPSLST (139 aa).

Belongs to the Bunyavirales RNA polymerase family. As to quaternary structure, homomultimer. Interacts with glycoprotein N; this interaction allows efficient polymerase packaging into virus particles. Interacts with nucleoprotein N. Mn(2+) is required as a cofactor. The cofactor is Mg(2+).

The protein resides in the host Golgi apparatus. It localises to the host endoplasmic reticulum. The protein localises to the host endoplasmic reticulum-Golgi intermediate compartment. Its subcellular location is the virion. It carries out the reaction RNA(n) + a ribonucleoside 5'-triphosphate = RNA(n+1) + diphosphate. In terms of biological role, RNA-dependent RNA polymerase, which is responsible for the replication and transcription of the viral RNA genome using antigenomic RNA as an intermediate. During transcription, synthesizes subgenomic RNAs and assures their capping by a cap-snatching mechanism, which involves the endonuclease activity cleaving the host capped pre-mRNAs. These short capped RNAs are then used as primers for viral transcription. The 3'-end of subgenomic mRNAs molecules are not polyadenylated. During replication, the polymerase binds the 5' and 3' vRNA extremities at distinct sites. In turn, significant conformational changes occur in the polymerase and in vRNA to initiate active RNA synthesis. As a consequence of the use of the same enzyme for both transcription and replication, these mechanisms need to be well coordinated. In Avena sativa (Oat), this protein is RNA-directed RNA polymerase L.